We begin with the raw amino-acid sequence, 688 residues long: Elongation factor G (688 aa).

Residues 8-282 (EKFRNFGIMA…GVVDYLPSPL (275 aa)) form the tr-type G domain. GTP-binding positions include 17 to 24 (AHIDAGKT), 81 to 85 (DTPGH), and 135 to 138 (NKMD).

The protein belongs to the TRAFAC class translation factor GTPase superfamily. Classic translation factor GTPase family. EF-G/EF-2 subfamily.

It localises to the cytoplasm. Its function is as follows. Catalyzes the GTP-dependent ribosomal translocation step during translation elongation. During this step, the ribosome changes from the pre-translocational (PRE) to the post-translocational (POST) state as the newly formed A-site-bound peptidyl-tRNA and P-site-bound deacylated tRNA move to the P and E sites, respectively. Catalyzes the coordinated movement of the two tRNA molecules, the mRNA and conformational changes in the ribosome. This is Elongation factor G from Clostridium perfringens (strain 13 / Type A).